Reading from the N-terminus, the 179-residue chain is DELTA-actitoxin-Afr1c (179 aa).

An N-terminal alpha-helix that contributes to the pore region spans residues 1-29; that stretch reads SAEVAGAIIDGASLTFDVLQTVLKALGDV. The segment at 11–30 is N-terminal region; sequence GASLTFDVLQTVLKALGDVS. Position 31 (arginine 31) interacts with an N-(acyl)-sphingosylphosphocholine. Residues tyrosine 51 and arginine 53 each coordinate N-acetyl-D-glucosamine 6-sulfate. The an N-(acyl)-sphingosylphosphocholine site is built by arginine 53, serine 54, arginine 79, glycine 85, tyrosine 113, serine 114, tryptophan 116, tyrosine 133, tyrosine 137, tyrosine 138, arginine 144, and glycine 168. Residues 105 to 120 are trp-rich region, which is important for the binding to lipid membrane; the sequence is SIPFDYNLYSNWWNVK. Tyrosine 138 serves as a coordination point for N-acetyl-D-glucosamine 6-sulfate. The short motif at 144 to 146 is the Cell attachment site, crucial for protein stability element; it reads RGD.

It belongs to the actinoporin family. Sea anemone subfamily. In terms of assembly, octamer or nonamer in membranes. Monomer in the soluble state.

Its subcellular location is the secreted. The protein resides in the nematocyst. It localises to the target cell membrane. Pore-forming toxin (PFT) that consists of a crown-shaped octamer or nonamer that forms cation-selective hydrophilic pores of about 1.5 nm (inside) and 13 nm (outside) and causes cytolysis. It causes cardiac stimulation. Also causes hemolysis (HC(50)=0.3 nM). Interestingly, the Phe-16 is crucial for hemolysis. Pore formation is a multi-step process that involves specific recognition of membrane sphingomyelin (but neither cholesterol nor phosphatidylcholine) using aromatic rich region and adjacent phosphocholine (POC) binding site, firm binding to the membrane (mainly driven by hydrophobic interactions) accompanied by the transfer of the N-terminal region to the lipid-water interface and finally pore formation after oligomerization of monomers. It is probable that a dimeric form is an assembly intermediate before the complete oligomerization. The formation of stable pores occurs only in vesicles composed of DOPC/SM (there is no oligomerization when the PFT is treated with vesicles of DOPC or SM alone). The transmembrane pore displays 8 lateral perforations, one at each subunit-subunit interface, partially occupied by the acyl-chain region of a bridging lipid. Each pore contains 24 lipid molecules, firmly bound to each subunit, that is, 3 lipids (L1, L2, L3, L4 and/or L5) are associated to each subunit. Lipid L1 bridges 2 subunits, whereas lipids L2 and L3 bind to sites at single subunit. This chain is DELTA-actitoxin-Afr1c, found in Actinia fragacea (Strawberry anemone).